A 398-amino-acid polypeptide reads, in one-letter code: Serpin-Z2B (398 aa).

Positions 343 to 367 (GTEAAATTIAKVVLRQAPPPSVLDF) are RCL.

Belongs to the serpin family.

Functionally, inhibits chymotrypsin, cathepsin G and trypsin in vitro. This is Serpin-Z2B from Triticum aestivum (Wheat).